A 239-amino-acid polypeptide reads, in one-letter code: Ribosomal RNA small subunit methyltransferase G (239 aa).

S-adenosyl-L-methionine contacts are provided by residues Gly78, Phe83, 129–130 (AE), and Arg148.

The protein belongs to the methyltransferase superfamily. RNA methyltransferase RsmG family.

Its subcellular location is the cytoplasm. In terms of biological role, specifically methylates the N7 position of a guanine in 16S rRNA. The polypeptide is Ribosomal RNA small subunit methyltransferase G (Clostridium botulinum (strain 657 / Type Ba4)).